The following is a 648-amino-acid chain: Cell surface glycoprotein MUC18 (648 aa).

Residues Met1–Gly23 form the signal peptide. Ig-like V-type domains lie at Val24–Glu131 and Pro141–Thr244. The Extracellular portion of the chain corresponds to Val24 to Val563. 5 disulfides stabilise this stretch: Cys50–Cys118, Cys163–Cys225, Cys274–Cys322, Cys367–Cys409, and Cys454–Cys501. Asn58 carries an N-linked (GlcNAc...) asparagine glycan. Ig-like C2-type domains are found at residues Pro246–Thr332, Pro337–Ser426, and Ser432–Thr512. The segment at Gln281 to Asn304 is disordered. Asn510 carries N-linked (GlcNAc...) asparagine glycosylation. The segment covering Thr532 to Ser549 has biased composition (polar residues). The disordered stretch occupies residues Thr532 to Leu554. The helical transmembrane segment at Ile564–Phe584 threads the bilayer. The Cytoplasmic segment spans residues Tyr585 to His648. 2 positions are modified to phosphoserine: Ser608 and Ser616. A disordered region spans residues Leu625–His648. Residues Gly631–His648 show a composition bias toward basic and acidic residues.

Detected in melanoma cell lines.

The protein localises to the membrane. Its function is as follows. Plays a role in cell adhesion, and in cohesion of the endothelial monolayer at intercellular junctions in vascular tissue. Its expression may allow melanoma cells to interact with cellular elements of the vascular system, thereby enhancing hematogeneous tumor spread. Could be an adhesion molecule active in neural crest cells during embryonic development. Acts as a surface receptor that triggers tyrosine phosphorylation of FYN and PTK2/FAK1, and a transient increase in the intracellular calcium concentration. The chain is Cell surface glycoprotein MUC18 (Mcam) from Mus musculus (Mouse).